The sequence spans 263 residues: Diphthine synthase (263 aa).

S-adenosyl-L-methionine contacts are provided by residues leucine 11, aspartate 89, alanine 92, 117–118 (SV), leucine 166, and leucine 208.

It belongs to the diphthine synthase family. Homodimer.

It catalyses the reaction 2-[(3S)-amino-3-carboxypropyl]-L-histidyl-[translation elongation factor 2] + 3 S-adenosyl-L-methionine = diphthine-[translation elongation factor 2] + 3 S-adenosyl-L-homocysteine + 3 H(+). The protein operates within protein modification; peptidyl-diphthamide biosynthesis. Functionally, S-adenosyl-L-methionine-dependent methyltransferase that catalyzes the trimethylation of the amino group of the modified target histidine residue in translation elongation factor 2 (EF-2), to form an intermediate called diphthine. The three successive methylation reactions represent the second step of diphthamide biosynthesis. This chain is Diphthine synthase, found in Methanopyrus kandleri (strain AV19 / DSM 6324 / JCM 9639 / NBRC 100938).